Reading from the N-terminus, the 307-residue chain is Furaquinocin biosynthesis prenyltransferase (307 aa).

The protein belongs to the aromatic prenyltransferase family. As to quaternary structure, monomer.

The catalysed reaction is 2-O,3-dimethylflaviolin + (2E)-geranyl diphosphate = 6-linalyl-2-O,3-dimethylflaviolin + diphosphate. It carries out the reaction 2-O,3-dimethylflaviolin + (2E)-geranyl diphosphate + H(+) = 7-O-geranyl-2-O,3-dimethylflaviolin + diphosphate. Its activity is regulated as follows. Does not require any metal cations for activity. Its function is as follows. Involved in the biosynthesis of furaquinocin. Catalyzes the transfer of a geranyl group to 2-methoxy-3-methyl-flaviolin to yield 6-prenyl-2-methoxy-3-methyl-flaviolin and 7-O-geranyl-2-methoxy-3-methyl-flaviolin in a 10:1 ratio. Can also use other substrates such as flaviolin or 1,3-dihydroxy naphthalene, and can also use DMAPP as prenyl donor. This Streptomyces sp. (strain KO-3988) protein is Furaquinocin biosynthesis prenyltransferase.